The following is a 264-amino-acid chain: 3-methyl-2-oxobutanoate hydroxymethyltransferase (264 aa).

2 residues coordinate Mg(2+): aspartate 45 and aspartate 84. Residues 45 to 46 (DS), aspartate 84, and lysine 112 each bind 3-methyl-2-oxobutanoate. Glutamate 114 serves as a coordination point for Mg(2+). Glutamate 181 (proton acceptor) is an active-site residue.

This sequence belongs to the PanB family. As to quaternary structure, homodecamer; pentamer of dimers. It depends on Mg(2+) as a cofactor.

Its subcellular location is the cytoplasm. It carries out the reaction 3-methyl-2-oxobutanoate + (6R)-5,10-methylene-5,6,7,8-tetrahydrofolate + H2O = 2-dehydropantoate + (6S)-5,6,7,8-tetrahydrofolate. It functions in the pathway cofactor biosynthesis; (R)-pantothenate biosynthesis; (R)-pantoate from 3-methyl-2-oxobutanoate: step 1/2. Its function is as follows. Catalyzes the reversible reaction in which hydroxymethyl group from 5,10-methylenetetrahydrofolate is transferred onto alpha-ketoisovalerate to form ketopantoate. In Shewanella pealeana (strain ATCC 700345 / ANG-SQ1), this protein is 3-methyl-2-oxobutanoate hydroxymethyltransferase.